A 466-amino-acid polypeptide reads, in one-letter code: Uronate isomerase (466 aa).

The protein belongs to the metallo-dependent hydrolases superfamily. Uronate isomerase family.

It catalyses the reaction D-glucuronate = D-fructuronate. The enzyme catalyses aldehydo-D-galacturonate = keto-D-tagaturonate. The protein operates within carbohydrate metabolism; pentose and glucuronate interconversion. This is Uronate isomerase from Caldanaerobacter subterraneus subsp. tengcongensis (strain DSM 15242 / JCM 11007 / NBRC 100824 / MB4) (Thermoanaerobacter tengcongensis).